A 486-amino-acid chain; its full sequence is Citrate synthase 3, mitochondrial (486 aa).

Residues 1–23 (MVQRLLPGAHICRRSFNSSAIIK) constitute a mitochondrion transit peptide. Active-site residues include His315, His361, and Asp419. Positions 484–486 (NKL) match the Microbody targeting signal motif.

This sequence belongs to the citrate synthase family.

Its subcellular location is the mitochondrion. It catalyses the reaction oxaloacetate + acetyl-CoA + H2O = citrate + CoA + H(+). It participates in carbohydrate metabolism; tricarboxylic acid cycle; isocitrate from oxaloacetate: step 1/2. Dual specificity mitochondrial citrate and methylcitrate synthase with similar catalytic efficiency with both acetyl-CoA and propionyl-CoA. The sequence is that of Citrate synthase 3, mitochondrial from Saccharomyces cerevisiae (strain ATCC 204508 / S288c) (Baker's yeast).